Here is an 88-residue protein sequence, read N- to C-terminus: Small ribosomal subunit protein bS20 (88 aa).

The segment at 1-20 (MANHKSAEKRARQTIKRTER) is disordered.

This sequence belongs to the bacterial ribosomal protein bS20 family.

In terms of biological role, binds directly to 16S ribosomal RNA. This Campylobacter fetus subsp. fetus (strain 82-40) protein is Small ribosomal subunit protein bS20.